The sequence spans 510 residues: Lysine-specific demethylase 4D (510 aa).

Positions Ile-15–Arg-57 constitute a JmjN domain. Residues Glu-23 and Glu-24 each carry the polyADP-ribosyl glutamic acid modification. Tyr-133 is a 2-oxoglutarate binding site. The JmjC domain occupies Asp-143–Cys-309. 2 residues coordinate Fe cation: His-189 and Glu-191. 2-oxoglutarate contacts are provided by Asn-199 and Lys-207. Zn(2+) contacts are provided by Cys-235 and His-241. Lys-242 contacts 2-oxoglutarate. His-277 provides a ligand contact to Fe cation. 2 residues coordinate Zn(2+): Cys-307 and Cys-309. Residues Met-397–Pro-510 form a disordered region. The span at Arg-461 to Pro-471 shows a compositional bias: basic and acidic residues.

The protein belongs to the JHDM3 histone demethylase family. The cofactor is Fe(2+). Ubiquitinated via 'Lys-63'-linked ubiquitin chains. Deubiquitinated by USP14 with the help of TRIM14 leading to stabilization.

It is found in the nucleus. It carries out the reaction N(6),N(6),N(6)-trimethyl-L-lysyl(9)-[histone H3] + 2 2-oxoglutarate + 2 O2 = N(6)-methyl-L-lysyl(9)-[histone H3] + 2 formaldehyde + 2 succinate + 2 CO2. In terms of biological role, histone demethylase that specifically demethylates 'Lys-9' of histone H3, thereby playing a central role in histone code. Does not demethylate histone H3 'Lys-4', H3 'Lys-27', H3 'Lys-36' nor H4 'Lys-20'. Demethylates both di- and trimethylated H3 'Lys-9' residue, while it has no activity on monomethylated residues. Demethylation of Lys residue generates formaldehyde and succinate. The sequence is that of Lysine-specific demethylase 4D (Kdm4d) from Rattus norvegicus (Rat).